The following is a 393-amino-acid chain: NAD(P)H-quinone oxidoreductase subunit H, chloroplastic (393 aa).

Belongs to the complex I 49 kDa subunit family. NDH is composed of at least 16 different subunits, 5 of which are encoded in the nucleus.

The protein resides in the plastid. It localises to the chloroplast thylakoid membrane. The enzyme catalyses a plastoquinone + NADH + (n+1) H(+)(in) = a plastoquinol + NAD(+) + n H(+)(out). It catalyses the reaction a plastoquinone + NADPH + (n+1) H(+)(in) = a plastoquinol + NADP(+) + n H(+)(out). In terms of biological role, NDH shuttles electrons from NAD(P)H:plastoquinone, via FMN and iron-sulfur (Fe-S) centers, to quinones in the photosynthetic chain and possibly in a chloroplast respiratory chain. The immediate electron acceptor for the enzyme in this species is believed to be plastoquinone. Couples the redox reaction to proton translocation, and thus conserves the redox energy in a proton gradient. The sequence is that of NAD(P)H-quinone oxidoreductase subunit H, chloroplastic from Lactuca sativa (Garden lettuce).